Consider the following 142-residue polypeptide: uncharacterized protein (142 aa).

Residues 18–137 (QSSGYSCGPA…KIFTGNVLVV (120 aa)) form the Peptidase C39 domain.

This is an uncharacterized protein from Methanothermobacter marburgensis (strain ATCC BAA-927 / DSM 2133 / JCM 14651 / NBRC 100331 / OCM 82 / Marburg) (Methanobacterium thermoautotrophicum).